A 286-amino-acid polypeptide reads, in one-letter code: Bifunctional protein FolD (286 aa).

NADP(+) contacts are provided by residues 165–167 and S190; that span reads GRS.

It belongs to the tetrahydrofolate dehydrogenase/cyclohydrolase family. As to quaternary structure, homodimer.

It carries out the reaction (6R)-5,10-methylene-5,6,7,8-tetrahydrofolate + NADP(+) = (6R)-5,10-methenyltetrahydrofolate + NADPH. The catalysed reaction is (6R)-5,10-methenyltetrahydrofolate + H2O = (6R)-10-formyltetrahydrofolate + H(+). It participates in one-carbon metabolism; tetrahydrofolate interconversion. Its function is as follows. Catalyzes the oxidation of 5,10-methylenetetrahydrofolate to 5,10-methenyltetrahydrofolate and then the hydrolysis of 5,10-methenyltetrahydrofolate to 10-formyltetrahydrofolate. The sequence is that of Bifunctional protein FolD from Staphylococcus epidermidis (strain ATCC 35984 / DSM 28319 / BCRC 17069 / CCUG 31568 / BM 3577 / RP62A).